A 172-amino-acid chain; its full sequence is Nicotinamide-nucleotide adenylyltransferase (172 aa).

Belongs to the archaeal NMN adenylyltransferase family.

It localises to the cytoplasm. The catalysed reaction is beta-nicotinamide D-ribonucleotide + ATP + H(+) = diphosphate + NAD(+). It participates in cofactor biosynthesis; NAD(+) biosynthesis; NAD(+) from nicotinamide D-ribonucleotide: step 1/1. This chain is Nicotinamide-nucleotide adenylyltransferase, found in Methanococcus aeolicus (strain ATCC BAA-1280 / DSM 17508 / OCM 812 / Nankai-3).